Here is a 106-residue protein sequence, read N- to C-terminus: Thioredoxin-like protein YdbP (106 aa).

The Thioredoxin domain occupies Met1–Ser106. The cysteines at positions 29 and 32 are disulfide-linked.

The protein belongs to the thioredoxin family.

Its function is as follows. Participates in various redox reactions through the reversible oxidation of its active center dithiol to a disulfide and catalyzes dithiol-disulfide exchange reactions. The sequence is that of Thioredoxin-like protein YdbP (ydbP) from Bacillus subtilis (strain 168).